The following is a 633-amino-acid chain: Extracellular metalloproteinase 3 (633 aa).

The signal sequence occupies residues 1-18 (MHGLLLAGLLALPMNVLA). A propeptide spanning residues 19–246 (HPAEHHASNV…VHNVVDYVAS (228 aa)) is cleaved from the precursor. Asn232 and Asn410 each carry an N-linked (GlcNAc...) asparagine glycan. His429 contributes to the Zn(2+) binding site. The active site involves Glu430. Zn(2+) is bound at residue His433. Asn480 and Asn622 each carry an N-linked (GlcNAc...) asparagine glycan.

Belongs to the peptidase M36 family. Requires Zn(2+) as cofactor.

It localises to the secreted. Secreted metalloproteinase that allows assimilation of proteinaceous substrates and probably acts as a virulence factor. This Arthroderma gypseum (strain ATCC MYA-4604 / CBS 118893) (Microsporum gypseum) protein is Extracellular metalloproteinase 3 (MEP3).